A 313-amino-acid polypeptide reads, in one-letter code: tRNA dimethylallyltransferase (313 aa).

17-24 (GPTASGKT) provides a ligand contact to ATP. Position 19-24 (19-24 (TASGKT)) interacts with substrate. 3 interaction with substrate tRNA regions span residues 42-45 (DSAL), 166-170 (QRLSR), and 247-252 (RCVGYR).

The protein belongs to the IPP transferase family. As to quaternary structure, monomer. Requires Mg(2+) as cofactor.

It carries out the reaction adenosine(37) in tRNA + dimethylallyl diphosphate = N(6)-dimethylallyladenosine(37) in tRNA + diphosphate. Its function is as follows. Catalyzes the transfer of a dimethylallyl group onto the adenine at position 37 in tRNAs that read codons beginning with uridine, leading to the formation of N6-(dimethylallyl)adenosine (i(6)A). This chain is tRNA dimethylallyltransferase, found in Pectobacterium atrosepticum (strain SCRI 1043 / ATCC BAA-672) (Erwinia carotovora subsp. atroseptica).